The following is a 373-amino-acid chain: Peptide chain release factor 2 (373 aa).

At Gln252 the chain carries N5-methylglutamine.

The protein belongs to the prokaryotic/mitochondrial release factor family. In terms of processing, methylated by PrmC. Methylation increases the termination efficiency of RF2.

The protein localises to the cytoplasm. Its function is as follows. Peptide chain release factor 2 directs the termination of translation in response to the peptide chain termination codons UGA and UAA. The sequence is that of Peptide chain release factor 2 from Staphylococcus saprophyticus subsp. saprophyticus (strain ATCC 15305 / DSM 20229 / NCIMB 8711 / NCTC 7292 / S-41).